The chain runs to 364 residues: Long-wave-sensitive opsin 1 (364 aa).

The Extracellular portion of the chain corresponds to 1-52 (MAHTWGPQRLAGGQPQANFEESTQGSIFTYTNSNSTRDPFEGPNYHIAPRWV). O-linked (GlcNAc) serine glycosylation is present at serine 22. Asparagine 34 carries N-linked (GlcNAc...) asparagine glycosylation. The chain crosses the membrane as a helical span at residues 53–77 (YHLTSAWMVFVVIASVFTNGLVLAA). At 78-89 (TMRFKKLRHPLN) the chain is on the cytoplasmic side. Residues 90 to 115 (WILVNLAIADLAETIIASTISVVNQM) form a helical membrane-spanning segment. The Extracellular segment spans residues 116–129 (YGYFVLGHPLCVVE). Cysteine 126 and cysteine 203 are oxidised to a cystine. A helical transmembrane segment spans residues 130–149 (GYTVSLCGITGLWSLAIISW). The Cytoplasmic portion of the chain corresponds to 150-168 (ERWMVVCKPFGNVRFDAKL). A helical membrane pass occupies residues 169–192 (ATAGIAFSWIWAAVWTAPPIFGWS). Topologically, residues 193–218 (RYWPHGLKTSCGPDVFSGSSYPGVQS) are extracellular. Residues 219-246 (YMIVLMITCCFIPLSVIILCYLQVWLAI) traverse the membrane as a helical segment. Topologically, residues 247–268 (RAVAKQQKESESTQKAEKEVTR) are cytoplasmic. A helical transmembrane segment spans residues 269 to 292 (MVMVMIFAYCLCWGPYTFFACFAA). The Extracellular segment spans residues 293 to 300 (AHPGYAFH). Residues 301–325 (PLVAALPAYFAKSATIYNPIIYVFM) form a helical membrane-spanning segment. Lysine 312 carries the N6-(retinylidene)lysine modification. At 326-364 (NRQFRNCILQLFGKKVDDSSELSSVSKTEASSVSSVSPA) the chain is on the cytoplasmic side.

This sequence belongs to the G-protein coupled receptor 1 family. Opsin subfamily. Phosphorylated on some or all of the serine and threonine residues present in the C-terminal region. As to expression, the three color pigments are found in the cone photoreceptor cells.

It is found in the membrane. Functionally, visual pigments are the light-absorbing molecules that mediate vision. They consist of an apoprotein, opsin, covalently linked to cis-retinal. This chain is Long-wave-sensitive opsin 1 (OPN1LW), found in Capra hircus (Goat).